A 424-amino-acid chain; its full sequence is 3-ketoacyl-CoA thiolase B, peroxisomal (424 aa).

The N-terminal 26 residues, 1-26, are a transit peptide targeting the peroxisome; the sequence is MHRLQVVLGHLAGRSESSSALQAAPC. A PTS2-type peroxisomal targeting signal region spans residues 1-26; sequence MHRLQVVLGHLAGRSESSSALQAAPC. Cys-123 (acyl-thioester intermediate) is an active-site residue. Residues Lys-173 and Lys-234 each carry the N6-acetyllysine modification. 3 residues coordinate CoA: Arg-249, Thr-252, and Ser-276. Cys-408 functions as the Proton donor/acceptor in the catalytic mechanism.

Belongs to the thiolase-like superfamily. Thiolase family. As to quaternary structure, homodimer. Interacts (via PTS2-type peroxisomal targeting signal region) with PEX7; leading to its translocation into peroxisomes.

It is found in the peroxisome. The enzyme catalyses an acyl-CoA + acetyl-CoA = a 3-oxoacyl-CoA + CoA. It catalyses the reaction 2 acetyl-CoA = acetoacetyl-CoA + CoA. It carries out the reaction hexanoyl-CoA + acetyl-CoA = 3-oxooctanoyl-CoA + CoA. The catalysed reaction is tetradecanoyl-CoA + acetyl-CoA = 3-oxohexadecanoyl-CoA + CoA. The enzyme catalyses 3-oxohexadecanedioyl-CoA + CoA = tetradecanedioyl-CoA + acetyl-CoA. It catalyses the reaction 3-oxo-(6Z,9Z,12Z,15Z,18Z,21Z)-tetracosahexaenoyl-CoA + CoA = (4Z,7Z,10Z,13Z,16Z,19Z)-docosahexaenoyl-CoA + acetyl-CoA. It participates in lipid metabolism; peroxisomal fatty acid beta-oxidation. Functionally, responsible for the thiolytic cleavage of straight chain 3-keto fatty acyl-CoAs (3-oxoacyl-CoAs). Plays an important role in fatty acid peroxisomal beta-oxidation. Catalyzes the cleavage of short, medium, long, and very long straight chain 3-oxoacyl-CoAs. Medium chain straight 3-oxoacyl-CoAs are preferred substrates. The sequence is that of 3-ketoacyl-CoA thiolase B, peroxisomal from Rattus norvegicus (Rat).